The following is a 182-amino-acid chain: Mu-like prophage FluMu protein gp45 (182 aa).

The segment at 159 to 182 (TDHQSSGISGKNHDHEERVGKPVP) is disordered. The segment covering 169-182 (KNHDHEERVGKPVP) has biased composition (basic and acidic residues).

The protein to phage Mu protein gp45.

The protein is Mu-like prophage FluMu protein gp45 of Haemophilus influenzae (strain ATCC 51907 / DSM 11121 / KW20 / Rd).